A 385-amino-acid polypeptide reads, in one-letter code: Trichodiene synthase (385 aa).

It belongs to the trichodiene synthase family.

The enzyme catalyses (2E,6E)-farnesyl diphosphate = trichodiene + diphosphate. It participates in sesquiterpene biosynthesis; trichothecene biosynthesis. Functionally, TS is a member of the terpene cyclase group of enzymes. It catalyzes the isomerization and cyclization of farnesyl pyro-phosphate to form trichodiene, the first cyclic intermediate in the biosynthetic pathway for trichothecenes. It serves to branch trichothecene biosynthesis from the isoprenoid pathway. In Paramyrothecium roridum (Myrothecium leaf spot fungus), this protein is Trichodiene synthase (TRI5).